Reading from the N-terminus, the 482-residue chain is Wax ester synthase/diacylglycerol acyltransferase 9 (482 aa).

Over 1–195 the chain is Cytoplasmic; that stretch reads MEKKMKEEEE…FRLVLVVCST (195 aa). Histidine 140 serves as the catalytic Proton acceptor. A helical membrane pass occupies residues 196–216; that stretch reads VRLIWNTLVDSFLCMATIFFL. Topologically, residues 217 to 328 are lumenal; the sequence is KDTDTPLKGK…AKGSKCRWGN (112 aa). Residues 329 to 349 form a helical membrane-spanning segment; the sequence is YISVILFPFTIALQSDPLVYL. Residues 350-366 are Cytoplasmic-facing; that stretch reads SNVKSMIDRKKNSLITY. The helical transmembrane segment at 367-387 threads the bilayer; the sequence is IIYTFSEFVIKAFGINVAVAF. Residues 388-482 lie on the Lumenal side of the membrane; that stretch reads QRKIMLNTTM…LEKGLPNHVN (95 aa). Asparagine 394 carries an N-linked (GlcNAc...) asparagine glycan.

This sequence in the N-terminal section; belongs to the long-chain O-acyltransferase family. Mostly expressed in stems and siliques.

It localises to the cell membrane. The protein localises to the endoplasmic reticulum membrane. It carries out the reaction an acyl-CoA + a 1,2-diacyl-sn-glycerol = a triacyl-sn-glycerol + CoA. The enzyme catalyses a long chain fatty alcohol + a fatty acyl-CoA = a wax ester + CoA. The protein operates within glycerolipid metabolism; triacylglycerol biosynthesis. Its pathway is lipid metabolism. Bifunctional wax ester synthase/diacylglycerol acyltransferase. Involved in cuticular wax biosynthesis. The chain is Wax ester synthase/diacylglycerol acyltransferase 9 from Arabidopsis thaliana (Mouse-ear cress).